The chain runs to 150 residues: Transthyretin (150 aa).

An N-terminal signal peptide occupies residues 1–20; that stretch reads MASYRLLLLCLAGLVFVSEA. Cysteine 30 carries the sulfocysteine modification. Lysine 35 provides a ligand contact to L-thyroxine. At glutamate 62 the chain carries 4-carboxyglutamate. Glutamate 74 serves as a coordination point for L-thyroxine. Asparagine 118 carries an N-linked (GlcNAc...) asparagine glycan. Serine 137 is an L-thyroxine binding site.

This sequence belongs to the transthyretin family. As to quaternary structure, homotetramer. Dimer of dimers. In the homotetramer, subunits assemble around a central channel that can accommodate two ligand molecules. Interacts with RBP4. Post-translationally, sulfonation of the reactive cysteine Cys-30 enhances the stability of the native conformation of TTR, avoiding misassembly of the protein leading to amyloid formation. In terms of tissue distribution, detected in plasma and cerebrospinal fluid (at protein level). Highly expressed in the choroid plexus. Detected in liver.

The protein localises to the secreted. Its function is as follows. Thyroid hormone-binding protein. Probably transports thyroxine from the bloodstream to the brain. The protein is Transthyretin (TTR) of Sus scrofa (Pig).